The primary structure comprises 241 residues: 1-(5-phosphoribosyl)-5-[(5-phosphoribosylamino)methylideneamino] imidazole-4-carboxamide isomerase (241 aa).

Residue Asp8 is the Proton acceptor of the active site. Asp129 (proton donor) is an active-site residue.

The protein belongs to the HisA/HisF family.

It localises to the cytoplasm. The catalysed reaction is 1-(5-phospho-beta-D-ribosyl)-5-[(5-phospho-beta-D-ribosylamino)methylideneamino]imidazole-4-carboxamide = 5-[(5-phospho-1-deoxy-D-ribulos-1-ylimino)methylamino]-1-(5-phospho-beta-D-ribosyl)imidazole-4-carboxamide. It participates in amino-acid biosynthesis; L-histidine biosynthesis; L-histidine from 5-phospho-alpha-D-ribose 1-diphosphate: step 4/9. This Caulobacter sp. (strain K31) protein is 1-(5-phosphoribosyl)-5-[(5-phosphoribosylamino)methylideneamino] imidazole-4-carboxamide isomerase.